Consider the following 414-residue polypeptide: FAD-dependent monooxygenase adaC (414 aa).

Glu32, Ala43, Arg115, Asp325, and Gly338 together coordinate FAD.

The protein belongs to the paxM FAD-dependent monooxygenase family. Requires FAD as cofactor.

It carries out the reaction 3-(2,4-dioxopentyl)-3,6,8,9-tetrahydroxy-1-oxo-1,2,3,4-tetrahydroanthracene-2-carboxyl-[ACP] + NADPH + O2 + H(+) = 3-(2,4-dioxopentyl)-2,3,6,8,9-pentahydroxy-1-oxo-1,2,3,4-tetrahydroanthracene-2-carboxyl-[ACP] + NADP(+) + H2O. Its pathway is secondary metabolite biosynthesis. Functionally, FAD-dependent monooxygenase; part of the gene cluster that mediates the biosynthesis of the linear tetracyclic TAN-1612 neuropeptide Y receptor antagonist. The decaketide backbone of TAN-1612 is synthesized by the non-reducing polyketide synthase adaA via condensation of one acetyl-CoA starter unit with 9 malonyl-CoA units. The FAD-dependent monooxygenase adaC then performs hydroxylation at C2 while the polaketide chain is still attached to the NRPKS adaA. The alpha-hydroxylation step at C2 appears to be crucial for the following C18-C1 Claisen cyclization and release of the C9-hydroxyl version of TAN-1612 from the NRPKS adaA, two steps performed by the lactamase-like protein adaB. Finally, the O-methyltransferase adaD performs the C9 O-methylation to complete the biosynthesis of TAN-1612. The chain is FAD-dependent monooxygenase adaC from Aspergillus niger (strain ATCC MYA-4892 / CBS 513.88 / FGSC A1513).